The primary structure comprises 198 residues: Proteasome subunit beta type-2 (198 aa).

It belongs to the peptidase T1B family. As to quaternary structure, the 26S proteasome consists of a 20S proteasome core and two 19S regulatory subunits. The 20S proteasome core is composed of 28 subunits that are arranged in four stacked rings, resulting in a barrel-shaped structure. The two end rings are each formed by seven alpha subunits, and the two central rings are each formed by seven beta subunits. The catalytic chamber with the active sites is on the inside of the barrel.

The protein resides in the cytoplasm. It is found in the nucleus. Functionally, non-catalytic component of the proteasome, a multicatalytic proteinase complex which is characterized by its ability to cleave peptides with Arg, Phe, Tyr, Leu, and Glu adjacent to the leaving group at neutral or slightly basic pH. The proteasome has an ATP-dependent proteolytic activity. This Dictyostelium discoideum (Social amoeba) protein is Proteasome subunit beta type-2 (psmB2).